A 370-amino-acid polypeptide reads, in one-letter code: NADH-quinone oxidoreductase subunit D 2 (370 aa).

This sequence belongs to the complex I 49 kDa subunit family. In terms of assembly, NDH-1 is composed of 14 different subunits. Subunits NuoB, C, D, E, F, and G constitute the peripheral sector of the complex.

It localises to the cell membrane. It catalyses the reaction a quinone + NADH + 5 H(+)(in) = a quinol + NAD(+) + 4 H(+)(out). In terms of biological role, NDH-1 shuttles electrons from NADH, via FMN and iron-sulfur (Fe-S) centers, to quinones in the respiratory chain. The immediate electron acceptor for the enzyme in this species is believed to be ubiquinone. Couples the redox reaction to proton translocation (for every two electrons transferred, four hydrogen ions are translocated across the cytoplasmic membrane), and thus conserves the redox energy in a proton gradient. The polypeptide is NADH-quinone oxidoreductase subunit D 2 (Herpetosiphon aurantiacus (strain ATCC 23779 / DSM 785 / 114-95)).